We begin with the raw amino-acid sequence, 173 residues long: Photosystem I assembly protein Ycf3 (173 aa).

TPR repeat units follow at residues 35–68, 72–105, and 120–153; these read AFAY…EEDP, SYTF…NPKM, and GEQA…APDN.

It belongs to the Ycf3 family.

The protein resides in the plastid. Its subcellular location is the cyanelle thylakoid membrane. In terms of biological role, essential for the assembly of the photosystem I (PSI) complex. May act as a chaperone-like factor to guide the assembly of the PSI subunits. The sequence is that of Photosystem I assembly protein Ycf3 from Cyanophora paradoxa.